The chain runs to 349 residues: Dihydroorotate dehydrogenase (quinone) (349 aa).

Residues 67–71 and T91 contribute to the FMN site; that span reads AGLDK. K71 lines the substrate pocket. 116–120 is a substrate binding site; it reads NRLGF. 2 residues coordinate FMN: N147 and N180. N180 serves as a coordination point for substrate. S183 (nucleophile) is an active-site residue. Residue N185 participates in substrate binding. The FMN site is built by K225 and T253. 254-255 contributes to the substrate binding site; sequence NT. Residues G276, G305, and 326–327 each bind FMN; that span reads YT.

This sequence belongs to the dihydroorotate dehydrogenase family. Type 2 subfamily. Monomer. FMN serves as cofactor.

Its subcellular location is the cell membrane. The catalysed reaction is (S)-dihydroorotate + a quinone = orotate + a quinol. It participates in pyrimidine metabolism; UMP biosynthesis via de novo pathway; orotate from (S)-dihydroorotate (quinone route): step 1/1. Its function is as follows. Catalyzes the conversion of dihydroorotate to orotate with quinone as electron acceptor. The chain is Dihydroorotate dehydrogenase (quinone) from Bordetella pertussis (strain Tohama I / ATCC BAA-589 / NCTC 13251).